Consider the following 972-residue polypeptide: 116 kDa U5 small nuclear ribonucleoprotein component (972 aa).

Met1 is modified (N-acetylmethionine). Residues 1–54 (MDTDLYDEFGNYIGPELDSDEDDDELGRETKDLDEMDDDDDDDDIGDHDDDHPG) form a disordered region. 2 stretches are compositionally biased toward acidic residues: residues 17–26 (LDSDEDDDEL) and 34–48 (DEMD…IGDH). A Phosphoserine modification is found at Ser19. A Glycyl lysine isopeptide (Lys-Gly) (interchain with G-Cter in SUMO1); alternate cross-link involves residue Lys64. Residue Lys64 forms a Glycyl lysine isopeptide (Lys-Gly) (interchain with G-Cter in SUMO2); alternate linkage. Thr86 bears the Phosphothreonine mark. Residues 127 to 409 (ELIRNVTLCG…GIHLTKEELK (283 aa)) enclose the tr-type G domain. GTP is bound by residues 136–143 (GHLHHGKT), 204–208 (DTPGH), and 258–261 (NKID).

The protein belongs to the TRAFAC class translation factor GTPase superfamily. Classic translation factor GTPase family. EF-G/EF-2 subfamily. As to quaternary structure, component of the U5 snRNP and the U4/U6-U5 tri-snRNP complex, a building block of the spliceosome. The U4/U6-U5 tri-snRNP complex is composed of the U4, U6 and U5 snRNAs and at least PRPF3, PRPF4, PRPF6, PRPF8, PRPF31, SNRNP200, TXNL4A, SNRNP40, DDX23, CD2BP2, PPIH, SNU13, EFTUD2, SART1 and USP39. Component of the pre-catalytic, catalytic and post-catalytic spliceosome complexes. Component of the minor spliceosome, which splices U12-type introns. Within this complex, interacts with CRIPT. Interacts with ERBB4 and PRPF8. Interacts with PIH1D1. Interacts with RPAP3 and URI1 in a ZNHIT2-dependent manner. Interacts with NRDE2. Interacts with FAM50A. Interacts with UBL5.

Its subcellular location is the nucleus. Functionally, required for pre-mRNA splicing as component of the spliceosome, including pre-catalytic, catalytic and post-catalytic spliceosomal complexes. Component of the U5 snRNP and the U4/U6-U5 tri-snRNP complex, a building block of the spliceosome. As a component of the minor spliceosome, involved in the splicing of U12-type introns in pre-mRNAs. This is 116 kDa U5 small nuclear ribonucleoprotein component (EFTUD2) from Pongo abelii (Sumatran orangutan).